Reading from the N-terminus, the 147-residue chain is Ribonuclease 4 (147 aa).

An N-terminal signal peptide occupies residues 1-28; the sequence is MALQRTHSLLLLLLLTLLGLGLVQPSYG. Pyrrolidone carboxylic acid is present on Gln29. DUMP-binding residues include Arg35, His40, Lys68, Asn71, and Thr72. The active-site Proton acceptor is the His40. 4 disulfide bridges follow: Cys53–Cys109, Cys67–Cys120, Cys85–Cys135, and Cys92–Cys99. His144 acts as the Proton donor in catalysis. Position 145 (Phe145) interacts with dUMP.

This sequence belongs to the pancreatic ribonuclease family. As to expression, expressed in the cortical and medullary tubules of the kidney, and in the transitional epithelium of the urinary bladder (at protein level).

The protein localises to the secreted. Its function is as follows. Cleaves preferentially after uridine bases. Has antimicrobial activity against uropathogenic E.coli (UPEC). Probably contributes to urinary tract sterility. The protein is Ribonuclease 4 (RNASE4) of Homo sapiens (Human).